The sequence spans 87 residues: MANTAQARKRARQAVKQNAHNSSQRSTLRTAVKAVRKAIEAGDKTAAAQVFLASVSTIDRIADKKIIHKNKAARHKSRLAAALKALA.

The interval 1–29 (MANTAQARKRARQAVKQNAHNSSQRSTLR) is disordered. Polar residues predominate over residues 20-29 (HNSSQRSTLR).

Belongs to the bacterial ribosomal protein bS20 family.

In terms of biological role, binds directly to 16S ribosomal RNA. The polypeptide is Small ribosomal subunit protein bS20 (Herminiimonas arsenicoxydans).